The chain runs to 98 residues: NADH-ubiquinone oxidoreductase chain 4L (98 aa).

The next 3 helical transmembrane spans lie at 1–21 (MTLI…GLLM), 29–49 (ALLC…LTIL), and 61–81 (IILL…LVMV).

Belongs to the complex I subunit 4L family. As to quaternary structure, core subunit of respiratory chain NADH dehydrogenase (Complex I) which is composed of 45 different subunits.

It localises to the mitochondrion inner membrane. The catalysed reaction is a ubiquinone + NADH + 5 H(+)(in) = a ubiquinol + NAD(+) + 4 H(+)(out). Functionally, core subunit of the mitochondrial membrane respiratory chain NADH dehydrogenase (Complex I) which catalyzes electron transfer from NADH through the respiratory chain, using ubiquinone as an electron acceptor. Part of the enzyme membrane arm which is embedded in the lipid bilayer and involved in proton translocation. In Balaenoptera bonaerensis (Antarctic minke whale), this protein is NADH-ubiquinone oxidoreductase chain 4L (MT-ND4L).